The primary structure comprises 369 residues: 3-dehydroquinate synthase (369 aa).

NAD(+) contacts are provided by residues 75 to 80 (DGEEHK), 109 to 113 (GVIGD), 133 to 134 (TT), Lys-146, Lys-155, and 173 to 176 (TLKT). Zn(2+) is bound by residues Glu-188, His-251, and His-268.

Belongs to the sugar phosphate cyclases superfamily. Dehydroquinate synthase family. The cofactor is Co(2+). Zn(2+) serves as cofactor. Requires NAD(+) as cofactor.

The protein resides in the cytoplasm. It catalyses the reaction 7-phospho-2-dehydro-3-deoxy-D-arabino-heptonate = 3-dehydroquinate + phosphate. Its pathway is metabolic intermediate biosynthesis; chorismate biosynthesis; chorismate from D-erythrose 4-phosphate and phosphoenolpyruvate: step 2/7. Catalyzes the conversion of 3-deoxy-D-arabino-heptulosonate 7-phosphate (DAHP) to dehydroquinate (DHQ). The protein is 3-dehydroquinate synthase of Legionella pneumophila (strain Corby).